Reading from the N-terminus, the 87-residue chain is RNA-binding protein Hfq (87 aa).

Positions 9–68 (DPFLNALRRERIPVSIFLVNGIKLQGKIQSFDQFVILLENTVNQMVYKHAISTVVPARAV) constitute a Sm domain.

The protein belongs to the Hfq family. In terms of assembly, homohexamer.

In terms of biological role, RNA chaperone that binds small regulatory RNA (sRNAs) and mRNAs to facilitate mRNA translational regulation in response to envelope stress, environmental stress and changes in metabolite concentrations. Also binds with high specificity to tRNAs. This is RNA-binding protein Hfq from Pseudoalteromonas translucida (strain TAC 125).